Consider the following 349-residue polypeptide: Protein RecA (349 aa).

Residue 67-74 (GPESSGKT) coordinates ATP.

Belongs to the RecA family.

It localises to the cytoplasm. Functionally, can catalyze the hydrolysis of ATP in the presence of single-stranded DNA, the ATP-dependent uptake of single-stranded DNA by duplex DNA, and the ATP-dependent hybridization of homologous single-stranded DNAs. It interacts with LexA causing its activation and leading to its autocatalytic cleavage. This is Protein RecA from Chlamydia abortus (strain DSM 27085 / S26/3) (Chlamydophila abortus).